Consider the following 76-residue polypeptide: KANTR integral membrane protein (76 aa).

A signal peptide spans 1 to 25 (MSPFSLLILVICAFSLFFLINLSRG). The Extracellular portion of the chain corresponds to 26-34 (LSILLVFTK). The chain crosses the membrane as a helical span at residues 35–55 (NQLLALLLLSIVSLFSISLIS). Over 56-76 (ALIFFDLLPSTFFGFILLLFF) the chain is Cytoplasmic.

The protein resides in the membrane. The sequence is that of KANTR integral membrane protein from Mus musculus (Mouse).